The primary structure comprises 121 residues: uncharacterized protein (121 aa).

Residues 43-86 (LKECSSHVAAFADCSKDKYISVVWECRELQQLMKNCLVEYTTSE) enclose the CHCH domain. 2 consecutive short sequence motifs (cx9C motif) follow at residues 46-56 (CSSHVAAFADC) and 68-78 (CRELQQLMKNC). 2 cysteine pairs are disulfide-bonded: cysteine 46-cysteine 78 and cysteine 56-cysteine 68.

The protein belongs to the CMC family.

This is an uncharacterized protein from Dictyostelium discoideum (Social amoeba).